Consider the following 236-residue polypeptide: LexA repressor (236 aa).

Residues Met1–Ser25 are disordered. The segment at residues Ile51–Arg71 is a DNA-binding region (H-T-H motif). Residues Ser160 and Lys197 each act as for autocatalytic cleavage activity in the active site.

The protein belongs to the peptidase S24 family. Homodimer.

The enzyme catalyses Hydrolysis of Ala-|-Gly bond in repressor LexA.. Represses a number of genes involved in the response to DNA damage (SOS response), including recA and lexA. In the presence of single-stranded DNA, RecA interacts with LexA causing an autocatalytic cleavage which disrupts the DNA-binding part of LexA, leading to derepression of the SOS regulon and eventually DNA repair. The chain is LexA repressor from Mycobacterium tuberculosis (strain ATCC 25177 / H37Ra).